The following is a 684-amino-acid chain: DNA ligase (684 aa).

NAD(+)-binding positions include 48–52 (DYEYD), 97–98 (SL), and glutamate 129. Lysine 131 serves as the catalytic N6-AMP-lysine intermediate. NAD(+) contacts are provided by arginine 152, glutamate 189, lysine 310, and lysine 334. Positions 429, 432, 447, and 452 each coordinate Zn(2+). Residues 609–684 (AQEGSLSGMS…ISWEELQAMI (76 aa)) enclose the BRCT domain.

This sequence belongs to the NAD-dependent DNA ligase family. LigA subfamily. Mg(2+) is required as a cofactor. Mn(2+) serves as cofactor.

It catalyses the reaction NAD(+) + (deoxyribonucleotide)n-3'-hydroxyl + 5'-phospho-(deoxyribonucleotide)m = (deoxyribonucleotide)n+m + AMP + beta-nicotinamide D-nucleotide.. Functionally, DNA ligase that catalyzes the formation of phosphodiester linkages between 5'-phosphoryl and 3'-hydroxyl groups in double-stranded DNA using NAD as a coenzyme and as the energy source for the reaction. It is essential for DNA replication and repair of damaged DNA. The protein is DNA ligase of Bdellovibrio bacteriovorus (strain ATCC 15356 / DSM 50701 / NCIMB 9529 / HD100).